The following is a 559-amino-acid chain: Cation/calcium exchanger 2 (559 aa).

Helical transmembrane passes span 10–30 (FGYL…GFFT), 86–106 (GFPI…FYLL), 131–151 (VAGV…ASLV), 167–187 (TVVG…SISL), 203–223 (ICFF…GKIN), 224–244 (FWGA…VVLS), 331–351 (WSKP…SFLW), 362–382 (AGVV…IAGA), 393–413 (WLLP…YISA), 416–436 (LVAL…ILGL), 480–500 (FALG…SIVI), 506–526 (LLES…VLFS), and 531–551 (LGGV…SLRI).

The protein belongs to the Ca(2+):cation antiporter (CaCA) (TC 2.A.19) family. Cation/calcium exchanger (CCX) subfamily.

It localises to the membrane. Its function is as follows. Membrane-localized H(+)-dependent K(+) and Na(+) transporter. The protein is Cation/calcium exchanger 2 (CCX2) of Arabidopsis thaliana (Mouse-ear cress).